The primary structure comprises 134 residues: MVKIRLKRAGRKKMPFYQIVAADGRAPRDGKFLEVLGHYNPTAKPHTVTIEKDRVAYWLNVGAQPTDTVHSLIRGTGLLHEMNLKRRGLSESDIAAQMEAWRQKEAERRQKRLNAKLRRRQAKKAAEAAGSAEG.

Positions 115–134 (AKLRRRQAKKAAEAAGSAEG) are disordered.

It belongs to the bacterial ribosomal protein bS16 family.

This is Small ribosomal subunit protein bS16 from Chlorobaculum tepidum (strain ATCC 49652 / DSM 12025 / NBRC 103806 / TLS) (Chlorobium tepidum).